A 276-amino-acid polypeptide reads, in one-letter code: Lyso-ornithine lipid O-acyltransferase (276 aa).

Residues 25 to 47 form a helical membrane-spanning segment; the sequence is LALRGGAMALVLMAGLTLHLAVR.

It belongs to the 1-acyl-sn-glycerol-3-phosphate acyltransferase family. OlsA subfamily.

It localises to the membrane. The catalysed reaction is a lyso-ornithine lipid + a fatty acyl-[ACP] = an N(2)-[(3R)-3-(acyloxy)acyl]-L-ornithine lipid + holo-[ACP]. It catalyses the reaction a fatty acyl-[ACP] + a 1-acyl-sn-glycero-3-phosphate = a 1,2-diacyl-sn-glycero-3-phosphate + holo-[ACP]. It participates in lipid metabolism. Its pathway is phospholipid metabolism. Functionally, catalyzes the second step in the formation of ornithine lipids, which are phosphorus-free membrane lipids. Uses acyl-acyl carrier protein (acyl-AcpP) as an acyl donor and converts lyso-ornithine lipid (LOL) into ornithine lipid (OL). It can also act as an alternate acyl-sn-glycerol-3-phosphate acyltransferase (AGPAT) to ensure glycerophospholipid production. This Rhodobacter capsulatus (strain ATCC BAA-309 / NBRC 16581 / SB1003) protein is Lyso-ornithine lipid O-acyltransferase.